Here is a 746-residue protein sequence, read N- to C-terminus: Ribosome biogenesis protein BOP1 (746 aa).

The interval 1–116 is disordered; it reads MAGSRGAGRT…PCPRTEMASA (116 aa). The segment covering 43 to 65 has biased composition (low complexity); the sequence is SHSTGSDSGVSDSEESVFSGLED. Residues 66–87 show a composition bias toward acidic residues; the sequence is SGSDSSEDDDEGDEEGEDGALD. The segment covering 88–99 has biased composition (basic and acidic residues); that stretch reads DEGHSGIKKTTE. At Thr-106 the chain carries Phosphothreonine. Tyr-122 is modified (phosphotyrosine). A phosphoserine mark is found at Ser-126 and Ser-127. The interval 265 to 427 is sufficient for nucleolar localization; sequence MGWIQPRRPR…CLSVSPGGQW (163 aa). WD repeat units lie at residues 411 to 450, 452 to 492, 532 to 576, 577 to 615, 618 to 657, 661 to 700, and 716 to 746; these read GHSDLVRCLSVSPGGQWLVSGSDDGSLRLWEVATARCVRT, PVGG…RLVA, CHGK…SPFR, RSHGQVQRVAFHPARPFLLVASQRSVRLYHLLRQELTKK, PNCKWVSSLAVHPAGDNVICGSYDSKLVWFDLDLSTKPYR, HHKKALRAVAFHPRYPLFASGSDDGSVIVCHGMVYNDLLQ, and TRDLGVLDVIFHPTQPWVFSSGADGTVRLFT.

This sequence belongs to the WD repeat BOP1/ERB1 family. As to quaternary structure, component of the PeBoW complex, composed of BOP1, PES1 and WDR12. The complex is held together by BOP1, which interacts with PES1 via its N-terminal domain and with WDR12 via a high-affinity interaction between the seven-bladed beta-propeller domains of the 2 proteins. The NOP7 complex associates with the 66S pre-ribosome. The PeBoW complex associates with DDX27, BOP1 interacts directly with DDX27.

The protein resides in the nucleus. The protein localises to the nucleolus. Its subcellular location is the nucleoplasm. In terms of biological role, component of the PeBoW complex, which is required for maturation of 28S and 5.8S ribosomal RNAs and formation of the 60S ribosome. In Homo sapiens (Human), this protein is Ribosome biogenesis protein BOP1.